A 298-amino-acid polypeptide reads, in one-letter code: Protoheme IX farnesyltransferase (298 aa).

The next 9 helical transmembrane spans lie at 16–36, 45–65, 93–113, 114–134, 141–161, 172–192, 218–238, 241–261, and 277–297; these read VVALIVFTALVGMFLAIPDMP, ALGFLGIWLAASAAAAINQLL, VFAGVLIVISMTILVVWVNVI, TAVLTFASLIGYAVIYTVYLK, IVIGGLAGATPPMLGWAAVTG, SLLVLIIFIWTPPHFWALAIF, ILVYTVLLAIVTLAPVAVGMS, FYLGGAAVLNAVFLWYAWRML, and IVYLMALFAFLMVDHLLLPWV.

This sequence belongs to the UbiA prenyltransferase family. Protoheme IX farnesyltransferase subfamily.

It is found in the cell inner membrane. It carries out the reaction heme b + (2E,6E)-farnesyl diphosphate + H2O = Fe(II)-heme o + diphosphate. The protein operates within porphyrin-containing compound metabolism; heme O biosynthesis; heme O from protoheme: step 1/1. Functionally, converts heme B (protoheme IX) to heme O by substitution of the vinyl group on carbon 2 of heme B porphyrin ring with a hydroxyethyl farnesyl side group. This Xanthomonas axonopodis pv. citri (strain 306) protein is Protoheme IX farnesyltransferase.